Here is a 463-residue protein sequence, read N- to C-terminus: L-seryl-tRNA(Sec) selenium transferase (463 aa).

Lysine 295 is subject to N6-(pyridoxal phosphate)lysine.

Belongs to the SelA family. Homodecamer; pentamer of dimers. Binds only one seryl-tRNA(Sec) per dimer. It depends on pyridoxal 5'-phosphate as a cofactor.

The protein resides in the cytoplasm. The enzyme catalyses L-seryl-tRNA(Sec) + selenophosphate + H(+) = L-selenocysteinyl-tRNA(Sec) + phosphate. Its pathway is aminoacyl-tRNA biosynthesis; selenocysteinyl-tRNA(Sec) biosynthesis; selenocysteinyl-tRNA(Sec) from L-seryl-tRNA(Sec) (bacterial route): step 1/1. Its function is as follows. Converts seryl-tRNA(Sec) to selenocysteinyl-tRNA(Sec) required for selenoprotein biosynthesis. This Escherichia coli O45:K1 (strain S88 / ExPEC) protein is L-seryl-tRNA(Sec) selenium transferase.